A 43-amino-acid chain; its full sequence is Protein PsbN (43 aa).

The chain crosses the membrane as a helical span at residues Thr-5 to Phe-27.

The protein belongs to the PsbN family.

The protein localises to the plastid. It is found in the chloroplast thylakoid membrane. Its function is as follows. May play a role in photosystem I and II biogenesis. In Cedrus deodara (Deodar cedar), this protein is Protein PsbN.